The sequence spans 605 residues: Glutamine--fructose-6-phosphate aminotransferase [isomerizing] (605 aa).

The active-site Nucleophile; for GATase activity is the Cys2. A Glutamine amidotransferase type-2 domain is found at 2 to 216; it reads CGIVGIVGHQ…DGDWAVIGKT (215 aa). 2 SIS domains span residues 280 to 420 and 454 to 595; these read DSDA…ARGT and LSRE…VDQP. Lys600 (for Fru-6P isomerization activity) is an active-site residue.

It is found in the cytoplasm. It catalyses the reaction D-fructose 6-phosphate + L-glutamine = D-glucosamine 6-phosphate + L-glutamate. In terms of biological role, involved in the production of the root hair deformation (HAD) factor specifically on medicago. This Rhizobium meliloti (Ensifer meliloti) protein is Glutamine--fructose-6-phosphate aminotransferase [isomerizing] (nodM).